Consider the following 296-residue polypeptide: tRNA pseudouridine synthase B (296 aa).

The active-site Nucleophile is the aspartate 38.

It belongs to the pseudouridine synthase TruB family. Type 1 subfamily.

It catalyses the reaction uridine(55) in tRNA = pseudouridine(55) in tRNA. In terms of biological role, responsible for synthesis of pseudouridine from uracil-55 in the psi GC loop of transfer RNAs. The chain is tRNA pseudouridine synthase B from Ehrlichia chaffeensis (strain ATCC CRL-10679 / Arkansas).